The sequence spans 359 residues: Methylthioribose-1-phosphate isomerase (359 aa).

Asp235 functions as the Proton donor in the catalytic mechanism.

Belongs to the eIF-2B alpha/beta/delta subunits family. MtnA subfamily.

It localises to the cytoplasm. The protein localises to the nucleus. It carries out the reaction 5-(methylsulfanyl)-alpha-D-ribose 1-phosphate = 5-(methylsulfanyl)-D-ribulose 1-phosphate. The protein operates within amino-acid biosynthesis; L-methionine biosynthesis via salvage pathway; L-methionine from S-methyl-5-thio-alpha-D-ribose 1-phosphate: step 1/6. Its function is as follows. Catalyzes the interconversion of methylthioribose-1-phosphate (MTR-1-P) into methylthioribulose-1-phosphate (MTRu-1-P). The sequence is that of Methylthioribose-1-phosphate isomerase (mri1) from Schizosaccharomyces pombe (strain 972 / ATCC 24843) (Fission yeast).